Consider the following 155-residue polypeptide: 6,7-dimethyl-8-ribityllumazine synthase (155 aa).

Residues Phe-23, 57–59, and 81–83 each bind 5-amino-6-(D-ribitylamino)uracil; these read AFE and AVI. A (2S)-2-hydroxy-3-oxobutyl phosphate-binding site is contributed by 86–87; the sequence is ST. The active-site Proton donor is the His-89. A 5-amino-6-(D-ribitylamino)uracil-binding site is contributed by Phe-114. Arg-128 is a (2S)-2-hydroxy-3-oxobutyl phosphate binding site.

Belongs to the DMRL synthase family.

The catalysed reaction is (2S)-2-hydroxy-3-oxobutyl phosphate + 5-amino-6-(D-ribitylamino)uracil = 6,7-dimethyl-8-(1-D-ribityl)lumazine + phosphate + 2 H2O + H(+). It participates in cofactor biosynthesis; riboflavin biosynthesis; riboflavin from 2-hydroxy-3-oxobutyl phosphate and 5-amino-6-(D-ribitylamino)uracil: step 1/2. Catalyzes the formation of 6,7-dimethyl-8-ribityllumazine by condensation of 5-amino-6-(D-ribitylamino)uracil with 3,4-dihydroxy-2-butanone 4-phosphate. This is the penultimate step in the biosynthesis of riboflavin. This Pelobacter propionicus (strain DSM 2379 / NBRC 103807 / OttBd1) protein is 6,7-dimethyl-8-ribityllumazine synthase.